A 385-amino-acid chain; its full sequence is MAAVVAATALKGRGARNARVLRGILAGATANKASHNRTRALQSHSSPEGKEEPEPLSPELEYIPRKRGKNPMKAVGLAWYSLYTRTWLGYLFYRQQLRRARNRYPKGHSKTQPRLFNGVKVLPIPVLSDNYSYLIIDTQAQLAVAVDPSDPRAVQASIEKEGVTLVAILCTHKHWDHSGGNRDLSRRHRDCRVYGSPQDGIPYLTHPLCHQDVVSVGRLQIRALATPGHTQGHLVYLLDGEPYKGPSCLFSGDLLFLSGCGRTFEGNAETMLSSLDTVLGLGDDTLLWPGHEYAEENLGFAGVVEPENLARERKMQWVQRQRLERKGTCPSTLGEERSYNPFLRTHCLALQEALGPGPGPTGDDDYSRAQLLEELRRLKDMHKSK.

The segment at 32 to 58 is disordered; sequence KASHNRTRALQSHSSPEGKEEPEPLSP. The Zn(2+) site is built by His172, His174, Asp176, His177, His229, Asp253, and His291.

The protein belongs to the metallo-beta-lactamase superfamily. Glyoxalase II family. In terms of assembly, isoform 2 interacts with the sarcomeric proteins, MRLC2, MYOM1 and ENO3. It depends on Zn(2+) as a cofactor. In terms of processing, undergoes cleavage at the N-terminus. In terms of tissue distribution, isoform 1 is only expressed in the brain. Isoform 2 is ubiquitously detected with highest expression in skeletal muscle and detected in myocardial myofibrils.

Its subcellular location is the cell membrane. The protein resides in the mitochondrion. The protein localises to the cytoplasm. It is found in the golgi apparatus. It localises to the endoplasmic reticulum. The enzyme catalyses a thioester + H2O = a thiol + a carboxylate + H(+). In terms of biological role, probable thioesterase that may play a role in cellular detoxification processes; it likely acts on a yet-unknown alpha-hydroxythioester substrate. In vitro, it is able to catalyze the hydrolysis of S-D-lactoyl-glutathione to form glutathione and D-lactic acid at very low rate, though this reaction is not physiologically relevant in vivo. The protein is Probable thioesterase PNKD (PNKD) of Homo sapiens (Human).